A 464-amino-acid polypeptide reads, in one-letter code: Light-independent protochlorophyllide reductase subunit N (464 aa).

[4Fe-4S] cluster-binding residues include C29, C54, and C114.

This sequence belongs to the BchN/ChlN family. As to quaternary structure, protochlorophyllide reductase is composed of three subunits; ChlL, ChlN and ChlB. Forms a heterotetramer of two ChlB and two ChlN subunits. It depends on [4Fe-4S] cluster as a cofactor.

The protein resides in the plastid. It localises to the chloroplast. The catalysed reaction is chlorophyllide a + oxidized 2[4Fe-4S]-[ferredoxin] + 2 ADP + 2 phosphate = protochlorophyllide a + reduced 2[4Fe-4S]-[ferredoxin] + 2 ATP + 2 H2O. It functions in the pathway porphyrin-containing compound metabolism; chlorophyll biosynthesis (light-independent). Component of the dark-operative protochlorophyllide reductase (DPOR) that uses Mg-ATP and reduced ferredoxin to reduce ring D of protochlorophyllide (Pchlide) to form chlorophyllide a (Chlide). This reaction is light-independent. The NB-protein (ChlN-ChlB) is the catalytic component of the complex. This Stigeoclonium helveticum (Green alga) protein is Light-independent protochlorophyllide reductase subunit N.